The following is a 586-amino-acid chain: Germ cell nuclear acidic protein (586 aa).

4 disordered regions span residues 17 to 119, 176 to 202, 217 to 266, and 279 to 318; these read GWDR…LSSE, KAKTVKTPKSVQKTKKPAPSLCNSPVF, TWRT…SSEE, and LGGRTSASPMPSAEPKPQRPCLSTPSATGRKTGSQVPVKD. The span at 65–76 shows a compositional bias: basic and acidic residues; sequence SGKENRSQEEHI. Polar residues predominate over residues 94 to 107; it reads TPKSTFKQSASSAQ. Positions 176 to 191 are enriched in basic residues; that stretch reads KAKTVKTPKSVQKTKK. The span at 225 to 244 shows a compositional bias: basic and acidic residues; sequence PPSDEHQATSKDREETEKPR. Residues 299–313 are compositionally biased toward polar residues; the sequence is CLSTPSATGRKTGSQ. A SprT-like domain is found at 383–482; sequence KLYQLYNTSV…LYARKAMLAH (100 aa).

It belongs to the serine-aspartate repeat-containing protein (SDr) family.

Its subcellular location is the nucleus. The protein resides in the PML body. It is found in the chromosome. May play a role in DNA-protein cross-links (DPCs) clearance, ensuring the genomic stability by protecting germ cells and early embryos from various sources of damage. The protein is Germ cell nuclear acidic protein (gcna) of Danio rerio (Zebrafish).